Reading from the N-terminus, the 379-residue chain is Glucose-1-phosphate adenylyltransferase (379 aa).

Residues G164, 179–180 (EK), and S190 each bind alpha-D-glucose 1-phosphate.

Belongs to the bacterial/plant glucose-1-phosphate adenylyltransferase family. As to quaternary structure, homotetramer.

It catalyses the reaction alpha-D-glucose 1-phosphate + ATP + H(+) = ADP-alpha-D-glucose + diphosphate. Its pathway is glycan biosynthesis; glycogen biosynthesis. In terms of biological role, involved in the biosynthesis of ADP-glucose, a building block required for the elongation reactions to produce glycogen. Catalyzes the reaction between ATP and alpha-D-glucose 1-phosphate (G1P) to produce pyrophosphate and ADP-Glc. The sequence is that of Glucose-1-phosphate adenylyltransferase from Streptococcus uberis (strain ATCC BAA-854 / 0140J).